Reading from the N-terminus, the 937-residue chain is Hyphally-regulated protein (937 aa).

Residues Met1 to Ala20 form the signal peptide. Asn16 carries an N-linked (GlcNAc...) asparagine glycan. Residues Val42 to Leu62 form a helical membrane-spanning segment. Residue Asn236 is glycosylated (N-linked (GlcNAc...) asparagine). The interval Ser332–Ser483 is disordered. Low complexity predominate over residues Thr344 to Thr392. The segment covering Asn393–Gly414 has biased composition (polar residues). The segment covering Ser415–Ser475 has biased composition (low complexity). N-linked (GlcNAc...) asparagine glycans are attached at residues Asn449, Asn488, Asn580, Asn585, Asn595, and Asn603. Residues Asp567 to Asn590 show a composition bias toward low complexity. The segment at Asp567–Glu857 is disordered. Gly residues predominate over residues His591–Ser609. Repeat unit 1 spans residues Asn610–Ser613. Residues Asn610–Ser753 are 7 X 4 AA repeats of N-E-G-S. N-linked (GlcNAc...) asparagine glycosylation is found at Asn619, Asn631, Asn641, and Asn649. 2 stretches are compositionally biased toward gly residues: residues Asn619–Asn631 and Asn641–Ser665. 4 consecutive repeat copies span residues Asn666–Ser669, Asn680–Ser683, Asn690–Ser693, and Asn698–Ser701. The segment covering Asn666 to Gly682 has biased composition (low complexity). Residues Glu699–Ser725 are compositionally biased toward gly residues. N-linked (GlcNAc...) asparagine glycosylation occurs at Asn711. A compositionally biased stretch (low complexity) spans Gln726–Asn742. Residues Asn738–Ser741 form repeat 6. Over residues Pro743–Ser801 the composition is skewed to gly residues. Residue Asn747 is glycosylated (N-linked (GlcNAc...) asparagine). The stretch at Asn750–Ser753 is repeat 7. 2 N-linked (GlcNAc...) asparagine glycosylation sites follow: Asn759 and Asn773. A compositionally biased stretch (low complexity) spans Glu802–Asn814. Over residues Ala817–Ser829 the composition is skewed to basic and acidic residues. Residues Ala841–Pro851 are compositionally biased toward polar residues. Residues Asn897 and Asn913 are each glycosylated (N-linked (GlcNAc...) asparagine). The GPI-anchor amidated asparagine moiety is linked to residue Asn913. Residues Gly914–Met937 constitute a propeptide, removed in mature form.

The protein resides in the cell membrane. Its subcellular location is the secreted. It localises to the cell wall. In terms of biological role, nonessential component of the hyphal cell wall. The sequence is that of Hyphally-regulated protein (HYR1) from Candida albicans (Yeast).